Here is a 1014-residue protein sequence, read N- to C-terminus: SYGYDEKGGISVPGPMGPSGPRGLPGPPGPGPQGFQGPPGEPGEPGSSGPMGPRGPPGPPGKNGDDGEAGKPGRPGERGPPGPQGARGLPGTAGLPGMKGHRGFSGLDGAKGDAGPAGPKGEPGSPGENGAPGQMGPRGLPGERGRPGASGPAGARGNDGATGAAGPPGPTGPAGPPGFPGAVGAKGEAGPQGARGSEGPQGVRGEPGPPGPAGAAGPAGNPGADGQPGAKGANGAPGIAGAPGFPGARGPSGPQGPSGPPGPKGNSGEPGAPGSKGDTGAKGEPGPTGIQGPPGPAGEEGKRGARGEPGPTGLPGPPGERGGPGSRGFPGADGVAGPKGPAGERGSPGPAGPKGSPGEAGRPGEAGLPGAKGLTGSPGSPGPDGKTGPPGPAGQDGRPGPPGPPGARGQAGVMGFPGPKGAAGEPGKAGERGVPGPPGAVGPAGKDGEAGAQGPPGPAGPAGERGEQGPAGPGFQGLPGPAGPPGEAGKPGEQGVPGDLGAPGPSGARGERGFPGERGVQGPPGPAGPRGNGAPGNDGAKGDSQGAPGLQGMPGERGAAGLPGPKGDRGDAGPKGADGAPGKDGVRGLTGPIGPPGPAGAPGDKGESGPSGPAGPTGARGAPGDRGEPGPPGPAGFAGPPGADGQPGAKGEPGDAGAKGDAGPSGPAGPTGPPGPIGNVGAPGPKGARGSAGPPGATGFPGAAGRVGPPGPSGNAGPPGPPGPVGKEGGKGPRGETGPAGRPGEVGPPGPPGPGEKGSPGADGPAGAPGTPGPQGISGQRGVVGLPGQRGERGFPGLPGPSGEPGKQGPSGSSGERGPPGPVGPPGLAGPPGESGREGAPGAEGSPGRDGSPGPKGDRGETGPGPPGAPGAPGAPGPVGPAGKNGDRGETGPAGPAGPAGPAGARGPAGPQGPRGDKGETGEQGDRGIKGHRGFSGLQGPAGPPGSPGEQGPSGASGPAGPRGPPGSAGSPGKDGLNGLPGPIGPPGPRGRTGDAGPVGPPGPPGPPGPPGPP.

The segment at 1-1014 (SYGYDEKGGI…PGPPGPPGPP (1014 aa)) is disordered. Residues 9 to 22 (GISVPGPMGPSGPR) show a composition bias toward low complexity. 4-hydroxyproline is present on residues proline 25, proline 28, proline 30, proline 39, proline 42, proline 45, proline 60, proline 75, proline 81, proline 90, and proline 96. Over residues 33-51 (QGFQGPPGEPGEPGSSGPM) the composition is skewed to low complexity. Positions 63-77 (NGDDGEAGKPGRPGE) are enriched in basic and acidic residues. The residue at position 99 (lysine 99) is a 5-hydroxylysine; alternate. A glycan (O-linked (Gal...) hydroxylysine; alternate) is linked at lysine 99. A Phosphoserine modification is found at serine 105. Over residues 113–129 (DAGPAGPKGEPGSPGEN) the composition is skewed to low complexity. 4-hydroxyproline is present on residues proline 123, proline 126, proline 132, proline 141, proline 147, proline 168, proline 177, proline 180, proline 207, proline 210, proline 222, proline 228, proline 237, proline 243, proline 246, and proline 261. Over residues 147 to 165 (PGASGPAGARGNDGATGAA) the composition is skewed to low complexity. Pro residues predominate over residues 167–179 (PPGPTGPAGPPGF). Positions 213 to 252 (AGAAGPAGNPGADGQPGAKGANGAPGIAGAPGFPGARGPS) are enriched in low complexity. A 5-hydroxylysine modification is found at lysine 264. 4-hydroxyproline is present on residues proline 270, proline 273, proline 285, proline 294, proline 309, proline 315, proline 324, and proline 330. Over residues 319 to 328 (GERGGPGSRG) the composition is skewed to gly residues. Position 339 is a 5-hydroxylysine (lysine 339). 4-hydroxyproline occurs at positions 348, 357, 363, 369, 378, 381, 390, 399, 405, 417, 426, 435, 438, 456, 473, 479, 485, 491, 497, 503, 515, 524, 535, 548, 554, and 563. Positions 372–398 (KGLTGSPGSPGPDGKTGPPGPAGQDGR) are enriched in low complexity. A compositionally biased stretch (low complexity) spans 407–426 (ARGQAGVMGFPGPKGAAGEP). Residues 485 to 494 (PGEAGKPGEQ) are compositionally biased toward low complexity. Lysine 575 carries the post-translational modification 5-hydroxylysine. Residues proline 581, proline 596, and proline 602 each carry the 4-hydroxyproline modification. A compositionally biased stretch (low complexity) spans 608-622 (SGPSGPAGPTGARGA). Serine 611 is modified (phosphoserine). 4-hydroxyproline occurs at positions 623, 629, 632, 641, 647, 674, and 683. Residues 635–665 (AGFAGPPGADGQPGAKGEPGDAGAKGDAGPS) show a composition bias toward low complexity. Lysine 686 is modified (5-hydroxylysine). The span at 691–707 (SAGPPGATGFPGAAGRV) shows a compositional bias: low complexity. A 4-hydroxyproline mark is found at proline 695 and proline 701. Residue proline 709 is modified to 3-hydroxyproline. 4-hydroxyproline is present on residues proline 710, proline 719, proline 722, proline 743, proline 752, proline 760, proline 769, proline 787, proline 796, proline 799, proline 805, proline 820, proline 826, proline 832, proline 841, and proline 847. Over residues 736 to 745 (ETGPAGRPGE) the composition is skewed to low complexity. Over residues 757–769 (KGSPGADGPAGAP) the composition is skewed to low complexity. Positions 819–829 (PPGPVGPPGLA) are enriched in pro residues. At lysine 856 the chain carries 5-hydroxylysine. Residues 864-879 (PGPPGAPGAPGAPGPV) are compositionally biased toward pro residues. A 4-hydroxyproline mark is found at proline 867, proline 870, and proline 873. Residues 900-914 (AGPAGARGPAGPQGP) are compositionally biased toward low complexity. Basic and acidic residues predominate over residues 915–929 (RGDKGETGEQGDRGI). Lysine 918 carries the post-translational modification 5-hydroxylysine. A 5-hydroxylysine; alternate modification is found at lysine 930. An O-linked (Gal...) hydroxylysine; alternate glycan is attached at lysine 930. Residues proline 945, proline 948, proline 966, and proline 981 each carry the 4-hydroxyproline modification. Residues 948–981 (PGEQGPSGASGPAGPRGPPGSAGSPGKDGLNGLP) are compositionally biased toward low complexity. Residue proline 986 is modified to 3-hydroxyproline. Residue proline 987 is modified to 4-hydroxyproline. Positions 999–1014 (VGPPGPPGPPGPPGPP) are enriched in pro residues. Proline 1001 is modified (3-hydroxyproline). Residue proline 1002 is modified to 4-hydroxyproline. Proline 1004 is modified (3-hydroxyproline). Proline 1005 carries the 4-hydroxyproline modification. Proline 1007 is subject to 3-hydroxyproline. 4-hydroxyproline occurs at positions 1008, 1011, and 1014.

Belongs to the fibrillar collagen family. As to quaternary structure, trimers of one alpha 2(I) and two alpha 1(I) chains. Contains mostly 4-hydroxyproline. Proline residues at the third position of the tripeptide repeating unit (G-X-Y) are hydroxylated in some or all of the chains. In terms of processing, contains 3-hydroxyproline at a few sites. This modification occurs on the first proline residue in the sequence motif Gly-Pro-Hyp, where Hyp is 4-hydroxyproline. Post-translationally, lysine residues at the third position of the tripeptide repeating unit (G-X-Y) are 5-hydroxylated in some or all of the chains. O-glycosylated on hydroxylated lysine residues. The O-linked glycan consists of a Glc-Gal disaccharide. Expressed in bones.

It is found in the secreted. The protein localises to the extracellular space. The protein resides in the extracellular matrix. Type I collagen is a member of group I collagen (fibrillar forming collagen). The protein is Collagen alpha-1(I) chain of Megatherium americanum (Giant ground sloth).